The chain runs to 218 residues: Probable septum site-determining protein MinC (218 aa).

Belongs to the MinC family. In terms of assembly, interacts with MinD and FtsZ.

In terms of biological role, cell division inhibitor that blocks the formation of polar Z ring septums. Rapidly oscillates between the poles of the cell to destabilize FtsZ filaments that have formed before they mature into polar Z rings. Prevents FtsZ polymerization. The polypeptide is Probable septum site-determining protein MinC (Kosmotoga olearia (strain ATCC BAA-1733 / DSM 21960 / TBF 19.5.1)).